A 1282-amino-acid polypeptide reads, in one-letter code: Autophagy-related protein 11 (1282 aa).

Coiled-coil stretches lie at residues 579–641, 722–799, and 834–917; these read VANE…QQYK, KHLD…ELQA, and DVNE…HNNL. The segment at 586–609 is disordered; it reads NDKLLANSKDENNDKQAEGGGHMS. Residues 593–602 are compositionally biased toward basic and acidic residues; that stretch reads SKDENNDKQA.

Belongs to the ATG11 family. Homodimer.

The protein resides in the preautophagosomal structure membrane. It is found in the vacuole membrane. Functionally, involved in cytoplasm to vacuole transport (Cvt), pexophagy, mitophagy and nucleophagy. Recruits mitochondria for their selective degradation via autophagy (mitophagy) during starvation. Works as scaffold proteins that recruit ATG proteins to the pre-autophagosome (PAS), the site of vesicle/autophagosome formation. Required for the Cvt vesicles completion. In Debaryomyces hansenii (strain ATCC 36239 / CBS 767 / BCRC 21394 / JCM 1990 / NBRC 0083 / IGC 2968) (Yeast), this protein is Autophagy-related protein 11 (ATG11).